Here is a 349-residue protein sequence, read N- to C-terminus: Phosphate acyltransferase (349 aa).

This sequence belongs to the PlsX family. In terms of assembly, homodimer. Probably interacts with PlsY.

It localises to the cytoplasm. It catalyses the reaction a fatty acyl-[ACP] + phosphate = an acyl phosphate + holo-[ACP]. It functions in the pathway lipid metabolism; phospholipid metabolism. Catalyzes the reversible formation of acyl-phosphate (acyl-PO(4)) from acyl-[acyl-carrier-protein] (acyl-ACP). This enzyme utilizes acyl-ACP as fatty acyl donor, but not acyl-CoA. This is Phosphate acyltransferase from Colwellia psychrerythraea (strain 34H / ATCC BAA-681) (Vibrio psychroerythus).